We begin with the raw amino-acid sequence, 273 residues long: Nitrogenase iron protein 4 (273 aa).

Residue 8 to 15 (GKGGIGKS) coordinates ATP. [4Fe-4S] cluster is bound at residue Cys94. Position 97 is an ADP-ribosylarginine; by dinitrogenase reductase ADP-ribosyltransferase (Arg97). Residue Cys129 coordinates [4Fe-4S] cluster.

The protein belongs to the NifH/BchL/ChlL family. As to quaternary structure, homodimer. [4Fe-4S] cluster serves as cofactor. The reversible ADP-ribosylation of Arg-97 inactivates the nitrogenase reductase and regulates nitrogenase activity.

It carries out the reaction N2 + 8 reduced [2Fe-2S]-[ferredoxin] + 16 ATP + 16 H2O = H2 + 8 oxidized [2Fe-2S]-[ferredoxin] + 2 NH4(+) + 16 ADP + 16 phosphate + 6 H(+). Functionally, the key enzymatic reactions in nitrogen fixation are catalyzed by the nitrogenase complex, which has 2 components: the iron protein and the molybdenum-iron protein. This Clostridium pasteurianum protein is Nitrogenase iron protein 4 (nifH4).